The chain runs to 503 residues: MTKAYENRMLLQALVLAAVLCTTHAEGTAKAPLKHSVATGFCSFSKAAKQAANKLAQTLDAVKATLNQNRKAHLQNLLVAVKRPTEQIAALILGQYANTQAASGLSDLGKWAPDETKTIGQALYTSGRLDGFIDVLDGHRSENSGQNKNCIANDGDGTTKAFDFDALCGPTEVAKAGNEPGDLKSSDRNGFWWHRRAAASGGNNHCVIFDDLNTAYSTKTAATDFLAGLIKVHQTTGLTAATAIAAQKSTNKILKDIDANWPKVQQAYTTAAGRSPTTEQEYKDLLKDESSRQKLRAAAQTVNNWKPADKPANMDDYLKQVFKIDANVNSAYVTAMKEISMDVPTKDGETQKKELFEMSEEDLEAALAVEIRRLSSENAKLTTEVKQLRRNQGKQATEDTCNKMKGETACNNKPFCTYNATETDENKKCKFNETKASKSGVSVAQAQTGGTQTTTDKCKDKKKDDCKSPDCKWEGETCKDSSFILNKQFALSVVSAAFAALLF.

The first 29 residues, 1–29 (MTKAYENRMLLQALVLAAVLCTTHAEGTA), serve as a signal peptide directing secretion. 2 cysteine pairs are disulfide-bonded: cysteine 42–cysteine 168 and cysteine 150–cysteine 206. 2 N-linked (GlcNAc...) asparagine glycosylation sites follow: asparagine 419 and asparagine 432. The GPI-anchor amidated aspartate moiety is linked to residue aspartate 480. Positions 481 to 503 (SSFILNKQFALSVVSAAFAALLF) are cleaved as a propeptide — removed in mature form.

The protein localises to the cell membrane. Functionally, VSG forms a coat on the surface of the parasite. The trypanosome evades the immune response of the host by expressing a series of antigenically distinct VSGs from an estimated 1000 VSG genes. This chain is Variant surface glycoprotein ILTAT 1.3, found in Trypanosoma brucei brucei.